A 410-amino-acid polypeptide reads, in one-letter code: Serine proteinase inhibitor A3K (410 aa).

An N-terminal signal peptide occupies residues 1-24 (MPSAISRGLLLLAGLCYLVFGIMA). Residues N62, N99, N162, N229, and N263 are each glycosylated (N-linked (GlcNAc...) asparagine). Residues 360 to 381 (GTEAAAATVLEATRTARPPRLS) are RCL.

The protein belongs to the serpin family.

The protein resides in the secreted. The protein localises to the extracellular space. In terms of biological role, contrapsin inhibits trypsin-like proteases. This is Serine proteinase inhibitor A3K (SERPINA3K) from Cavia porcellus (Guinea pig).